We begin with the raw amino-acid sequence, 208 residues long: Guanylate kinase (208 aa).

Residues 4–185 enclose the Guanylate kinase-like domain; sequence GNLYILSAPS…ALADFQAILR (182 aa). 11 to 18 is an ATP binding site; that stretch reads APSGAGKS.

Belongs to the guanylate kinase family.

The protein resides in the cytoplasm. It catalyses the reaction GMP + ATP = GDP + ADP. Its function is as follows. Essential for recycling GMP and indirectly, cGMP. This chain is Guanylate kinase (gmk), found in Pasteurella multocida (strain Pm70).